Here is a 503-residue protein sequence, read N- to C-terminus: Probable cytosol aminopeptidase (503 aa).

The Mn(2+) site is built by lysine 270 and aspartate 275. Lysine 282 is a catalytic residue. Residues aspartate 293, aspartate 352, and glutamate 354 each coordinate Mn(2+). Arginine 356 is an active-site residue.

It belongs to the peptidase M17 family. The cofactor is Mn(2+).

It is found in the cytoplasm. The enzyme catalyses Release of an N-terminal amino acid, Xaa-|-Yaa-, in which Xaa is preferably Leu, but may be other amino acids including Pro although not Arg or Lys, and Yaa may be Pro. Amino acid amides and methyl esters are also readily hydrolyzed, but rates on arylamides are exceedingly low.. The catalysed reaction is Release of an N-terminal amino acid, preferentially leucine, but not glutamic or aspartic acids.. Presumably involved in the processing and regular turnover of intracellular proteins. Catalyzes the removal of unsubstituted N-terminal amino acids from various peptides. This Shigella boydii serotype 4 (strain Sb227) protein is Probable cytosol aminopeptidase.